The primary structure comprises 247 residues: NCT transcriptional regulatory complex subunit A (247 aa).

A compositionally biased stretch (basic and acidic residues) spans 1–12; sequence MTDQDSTYRPRS. Disordered stretches follow at residues 1–31, 48–82, and 212–247; these read MTDQ…SPIY, FFAP…SPDM, and VPDQ…DDSD. Residues 13-22 show a composition bias toward polar residues; that stretch reads PDLSTFQSSI.

The protein belongs to the NC2 alpha/DRAP1 family. Forms the NCT transcriptional regulatory complex with nctB and mot1.

Its subcellular location is the nucleus. Its function is as follows. Part of the NCT transcriptional regulatory complex that acts as a key regulator of ergosterol biosynthesis and the azole exporter cdr1B. The NCT complex binds the promoters of genes linked to azole susceptibility, and especially represses the expression of cdr1B transporter. This chain is NCT transcriptional regulatory complex subunit A, found in Aspergillus fumigatus (strain CBS 144.89 / FGSC A1163 / CEA10) (Neosartorya fumigata).